A 424-amino-acid polypeptide reads, in one-letter code: MKLEMICTGEEVLAGQIVDTNAAWFASTMMEHGVEIQRRVTVGDRLEDLIAVFQERSLHADIILVNGGLGPTSDDMSALAMAKAKGEPLVENVEWRERLEEWFTRNNREMPLSNLKQAMLPASAVMVDNPVGTACGFRVKLNRAWLFFTPGVPFELKHMVTEQFVPFIRDEFNLDSKVALKKLLTIGQGESALADKLEPLELPEGITIGYRSSMPHIEIKIFARGEKAIAVLPRVAGHIKMVLGTAVVAEDKATLAEEIHYKLLNSGLTLSVAESCTGGMITSQLVDFSGSSSYLQHGLVTYSNESKVRVLGVNPSTLDDHGAVSIATVEEMAKGARQILDSDYALATSGIAGPDGGTDEKPVGTVAIALATRGGVYSQMIKLPRRSRDLVRSLSAAVAYDMLRRELLAEAVIVDYQSIGRFSK.

This sequence belongs to the CinA family.

The protein is CinA-like protein of Shewanella baltica (strain OS195).